Consider the following 624-residue polypeptide: Chaperone protein HtpG (624 aa).

An a; substrate-binding region spans residues 1–336; the sequence is MNMKGQETRG…SNDLPLNVSR (336 aa). Positions 337–552 are b; it reads EILQDSRITQ…ADEMSTQMAK (216 aa). The tract at residues 553–624 is c; the sequence is LFAAAGQQAP…IRRMNQLLTA (72 aa).

The protein belongs to the heat shock protein 90 family. As to quaternary structure, homodimer.

It localises to the cytoplasm. Molecular chaperone. Has ATPase activity. The protein is Chaperone protein HtpG of Yersinia pestis bv. Antiqua (strain Antiqua).